The chain runs to 497 residues: DNA-dependent metalloprotease SPRTN (497 aa).

M1 is subject to N-acetylmethionine. In terms of domain architecture, SprT-like spans 46-213 (LQALFLQFND…KTCGGTYIKI (168 aa)). Residue H112 participates in Zn(2+) binding. Residue E113 is part of the active site. Positions 116 and 131 each coordinate Zn(2+). K231 is modified (N6-acetyllysine). The SHP-box motif lies at 254–262 (FSGKGYVLG). Position 269 is a phosphoserine (S269). A Glycyl lysine isopeptide (Lys-Gly) (interchain with G-Cter in SUMO2) cross-link involves residue K304. Residues 326–333 (QSVLSSYF) carry the PIP-box motif. K342 participates in a covalent cross-link: Glycyl lysine isopeptide (Lys-Gly) (interchain with G-Cter in SUMO2); alternate. Residue K342 forms a Glycyl lysine isopeptide (Lys-Gly) (interchain with G-Cter in ubiquitin); alternate linkage. Positions 344–459 (FRNVNGSPVK…ASAPQSLSSQ (116 aa)) are disordered. Residues 347-356 (VNGSPVKNGT) are compositionally biased toward polar residues. K362 participates in a covalent cross-link: Glycyl lysine isopeptide (Lys-Gly) (interchain with G-Cter in SUMO2). Residues 383-404 (TSKVTAPASATVTSAAGTSATI) show a composition bias toward low complexity. At S384 the chain carries Phosphoserine. Positions 413-424 (DQFLNKRPRLED) match the Nuclear localization signal motif. Positions 420-432 (PRLEDRTALDTIK) are enriched in basic and acidic residues. K432 is covalently cross-linked (Glycyl lysine isopeptide (Lys-Gly) (interchain with G-Cter in SUMO2)). The span at 442–459 (RSSSQPTAASAPQSLSSQ) shows a compositional bias: low complexity. The UBZ4-type zinc finger occupies 462–489 (LVNCPVCQGVVVESQINEHLDRCLEGNK). Positions 465, 468, 480, and 484 each coordinate Zn(2+).

The protein belongs to the Spartan family. As to quaternary structure, homodimer. Interacts (VIA PIP-box) with PCNA (when ubiquitinated). Interacts (via its SHP-box) with VCP/p97. Interacts with RAD18. Interacts with KCTD13 and POLD3. It depends on Zn(2+) as a cofactor. In terms of processing, autocatalytically cleaved in response to double-stranded DNA-binding: autocatalytic cleavage takes place in trans and leads to inactivation. Monoubiquitinated; monoubiquitination promotes exclusion from chromatin. Deubiquitinated by VCPIP1: deubiquitination is required for subsequent acetylation and recruitment to chromatin and DNA damage sites. Post-translationally, acetylated following deubiquitination by VCPIP1, leading to recruitment to chromatin and DNA damage sites. In terms of processing, phosphorylation by CHEK1 promotes recruitment to chromatin.

Its subcellular location is the nucleus. It is found in the chromosome. Its activity is regulated as follows. DNA-binding activates the protease activity: single-stranded DNA-binding specifically activates ability to cleave covalent DNA-protein cross-links (DPCs). In contrast, double-stranded DNA-binding specifically activates autocatalytic cleavage, and subsequent inactivation. In terms of biological role, DNA-dependent metalloendopeptidase that mediates the proteolytic cleavage of covalent DNA-protein cross-links (DPCs) during DNA synthesis, thereby playing a key role in maintaining genomic integrity. DPCs are highly toxic DNA lesions that interfere with essential chromatin transactions, such as replication and transcription, and which are induced by reactive agents, such as UV light or formaldehyde. Associates with the DNA replication machinery and specifically removes DPCs during DNA synthesis. Catalyzes proteolytic cleavage of the HMCES DNA-protein cross-link following unfolding by the BRIP1/FANCJ helicase. Acts as a pleiotropic protease for DNA-binding proteins cross-linked with DNA, such as TOP1, TOP2A, histones H3 and H4. Mediates degradation of DPCs that are not ubiquitinated, while it is not able to degrade ubiquitinated DPCs. SPRTN activation requires polymerase collision with DPCs followed by helicase bypass of DPCs. Involved in recruitment of VCP/p97 to sites of DNA damage. Also acts as an activator of CHEK1 during normal DNA replication by mediating proteolytic cleavage of CHEK1, thereby promoting CHEK1 removal from chromatin and subsequent activation. Does not activate CHEK1 in response to DNA damage. May also act as a 'reader' of ubiquitinated PCNA: recruited to sites of UV damage and interacts with ubiquitinated PCNA and RAD18, the E3 ubiquitin ligase that monoubiquitinates PCNA. Facilitates chromatin association of RAD18 and is required for efficient PCNA monoubiquitination, promoting a feed-forward loop to enhance PCNA ubiquitination and translesion DNA synthesis. The polypeptide is DNA-dependent metalloprotease SPRTN (Mus musculus (Mouse)).